Reading from the N-terminus, the 591-residue chain is Cineole synthase 1, chloroplastic (591 aa).

A chloroplast-targeting transit peptide spans 1-44; it reads MSSLIMQVVIPKPAKFFHNNLFSLSSKRHRFSTTTTTRGGRWAR. Arg-308, Asp-345, Asp-349, Arg-486, and Asp-489 together coordinate (2E)-geranyl diphosphate. Mg(2+)-binding residues include Asp-345 and Asp-349. The DDXXD motif signature appears at 345–349; it reads DDVFD. Positions 489, 493, and 497 each coordinate Mg(2+).

It belongs to the terpene synthase family. Tpsb subfamily. In terms of assembly, monomer. Requires Mg(2+) as cofactor. Mn(2+) serves as cofactor.

It is found in the plastid. The protein resides in the chloroplast. It catalyses the reaction (2E)-geranyl diphosphate + H2O = 1,8-cineole + diphosphate. The catalysed reaction is (2E)-geranyl diphosphate = alpha-pinene + diphosphate. The enzyme catalyses (2E)-geranyl diphosphate = beta-pinene + diphosphate. It carries out the reaction (2E)-geranyl diphosphate + H2O = (S)-alpha-terpineol + diphosphate. It catalyses the reaction (2E)-geranyl diphosphate = beta-myrcene + diphosphate. The catalysed reaction is (2E)-geranyl diphosphate = sabinene + diphosphate. The protein operates within secondary metabolite biosynthesis; terpenoid biosynthesis. In terms of biological role, monoterpene synthase (TPS) involved in the biosynthesis of monoterpene natural products, components of the chemical defense arsenal. Catalyzes the conversion of (2E)-geranyl diphosphate (GPP) into 1,8-cineole, and, as minor products, alpha-terpineol, beta-pinene, alpha-pinene, sabinene and myrcene. The polypeptide is Cineole synthase 1, chloroplastic (Salvia fruticosa (Greek sage)).